The chain runs to 288 residues: Diaminopimelate epimerase (288 aa).

Residues Asn-13, Gln-51, and Asn-71 each contribute to the substrate site. The active-site Proton donor is the Cys-80. Residues 81 to 82 (GN), Asn-166, Asn-200, and 218 to 219 (ER) each bind substrate. Catalysis depends on Cys-227, which acts as the Proton acceptor. Substrate is bound at residue 228–229 (GT).

This sequence belongs to the diaminopimelate epimerase family. As to quaternary structure, homodimer.

It is found in the cytoplasm. It catalyses the reaction (2S,6S)-2,6-diaminopimelate = meso-2,6-diaminopimelate. It participates in amino-acid biosynthesis; L-lysine biosynthesis via DAP pathway; DL-2,6-diaminopimelate from LL-2,6-diaminopimelate: step 1/1. In terms of biological role, catalyzes the stereoinversion of LL-2,6-diaminopimelate (L,L-DAP) to meso-diaminopimelate (meso-DAP), a precursor of L-lysine and an essential component of the bacterial peptidoglycan. This chain is Diaminopimelate epimerase, found in Caulobacter vibrioides (strain ATCC 19089 / CIP 103742 / CB 15) (Caulobacter crescentus).